Consider the following 406-residue polypeptide: NADH-ubiquinone oxidoreductase 49 kDa subunit (406 aa).

It belongs to the complex I 49 kDa subunit family. In terms of assembly, complex I is composed of 45 different subunits. Component of the iron-sulfur (IP) fragment of the enzyme.

It localises to the mitochondrion inner membrane. The catalysed reaction is a ubiquinone + NADH + 5 H(+)(in) = a ubiquinol + NAD(+) + 4 H(+)(out). Core subunit of the mitochondrial membrane respiratory chain NADH dehydrogenase (Complex I) that is believed to belong to the minimal assembly required for catalysis. Complex I functions in the transfer of electrons from NADH to the respiratory chain. The immediate electron acceptor for the enzyme is believed to be ubiquinone. The chain is NADH-ubiquinone oxidoreductase 49 kDa subunit (nad7) from Dictyostelium discoideum (Social amoeba).